Reading from the N-terminus, the 311-residue chain is DNA replication terminus site-binding protein (311 aa).

It belongs to the Tus family.

The protein resides in the cytoplasm. Trans-acting protein required for termination of DNA replication. Binds to DNA replication terminator sequences (terA to terF) to prevent the passage of replication forks. The termination efficiency will be affected by the affinity of this protein for the terminator sequence. The polypeptide is DNA replication terminus site-binding protein (Yersinia pseudotuberculosis serotype O:1b (strain IP 31758)).